Consider the following 121-residue polypeptide: Large ribosomal subunit protein bL20 (121 aa).

It belongs to the bacterial ribosomal protein bL20 family.

Its function is as follows. Binds directly to 23S ribosomal RNA and is necessary for the in vitro assembly process of the 50S ribosomal subunit. It is not involved in the protein synthesizing functions of that subunit. This is Large ribosomal subunit protein bL20 from Methylorubrum populi (strain ATCC BAA-705 / NCIMB 13946 / BJ001) (Methylobacterium populi).